A 251-amino-acid chain; its full sequence is Flap endonuclease Xni (251 aa).

A Mg(2+)-binding site is contributed by D104. One can recognise a 5'-3' exonuclease domain in the interval 160-249 (VQPQQLPDYW…IDGNLQQLRL (90 aa)). K(+) contacts are provided by L171, A172, P180, V182, and I185. The segment at 184 to 189 (GIGPKS) is interaction with DNA.

This sequence belongs to the Xni family. It depends on Mg(2+) as a cofactor. Requires K(+) as cofactor.

In terms of biological role, has flap endonuclease activity. During DNA replication, flap endonucleases cleave the 5'-overhanging flap structure that is generated by displacement synthesis when DNA polymerase encounters the 5'-end of a downstream Okazaki fragment. In Escherichia coli O7:K1 (strain IAI39 / ExPEC), this protein is Flap endonuclease Xni.